The sequence spans 394 residues: C-19 steroid 1alpha-hydroxylase (394 aa).

6 residues coordinate heme b: histidine 81, arginine 85, arginine 281, glycine 335, histidine 338, and cysteine 340.

Belongs to the cytochrome P450 family. It depends on heme b as a cofactor.

The catalysed reaction is testosterone + 2 reduced [2Fe-2S]-[ferredoxin] + O2 + 2 H(+) = 1alpha-hydroxytestosterone + 2 oxidized [2Fe-2S]-[ferredoxin] + H2O. It catalyses the reaction androst-4-ene-3,17-dione + 2 reduced [2Fe-2S]-[ferredoxin] + O2 + 2 H(+) = 1alpha-hydroxyandrost-4-ene-3,17-dione + 2 oxidized [2Fe-2S]-[ferredoxin] + H2O. In terms of biological role, hydroxylase that can catalyze the in vitro conversion of the sesquiterpenoid nootkatone, a natural organic compound produced by some plants, to at least five hydrophilic products. The native ferredoxin reductase FdR_B and either Fdx2 or Fdx8 ferredoxins can act as the redox partners for the conversion of nootkatone. In addition, acts as a steroid 1alpha-hydroxylase, when associated in vitro with the surrogate redox partners bovine adrenodoxin (Adx) and adrenodoxin reductase (Adr). Acts on several C-19 steroid substrates, including testosterone and androstenedione, which are hydroxylated to 1alpha-hydroxytestosterone and 1alpha-hydroxyandrostenedione, respectively. Can use their derivatives testosterone-acetate and 11-oxoandrostenedione, but not vitamin D3 and 25-hydroxyvitamin D3. Also catalyzes the hydroxylation of the C-21 steroid 11-deoxycorticosterone to 1alpha-hydroxy-11-deoxycorticosterone. Catalyzes the hydroxylation of the C-21 steroid progesterone, leading to the formation of seven products: two major (1alpha-hydroxyprogesterone and 17alpha-hydroxyprogesterone) and five minor products. In Sorangium cellulosum (strain So ce56) (Polyangium cellulosum (strain So ce56)), this protein is C-19 steroid 1alpha-hydroxylase.